We begin with the raw amino-acid sequence, 453 residues long: Phosphoglucosamine mutase (453 aa).

Catalysis depends on Ser110, which acts as the Phosphoserine intermediate. Mg(2+) contacts are provided by Ser110, Asp248, Asp250, and Asp252. Ser110 carries the phosphoserine modification.

Belongs to the phosphohexose mutase family. Requires Mg(2+) as cofactor. Activated by phosphorylation.

It catalyses the reaction alpha-D-glucosamine 1-phosphate = D-glucosamine 6-phosphate. Its function is as follows. Catalyzes the conversion of glucosamine-6-phosphate to glucosamine-1-phosphate. This Mycolicibacterium smegmatis (strain ATCC 700084 / mc(2)155) (Mycobacterium smegmatis) protein is Phosphoglucosamine mutase.